The following is a 334-amino-acid chain: E3 ubiquitin-protein ligase ATL4 (334 aa).

The segment at 1–20 (MESLINPSHGGGNYDSHSSS) is disordered. The helical transmembrane segment at 28-48 (VLVIILILLMTLLISVSICFL) threads the bilayer. Residues 117-159 (CAVCLSKFEPEDQLRLLPLCCHAFHADCIDIWLVSNQTCPLCR) form an RING-type; atypical zinc finger.

The protein belongs to the RING-type zinc finger family. ATL subfamily.

The protein resides in the membrane. It catalyses the reaction S-ubiquitinyl-[E2 ubiquitin-conjugating enzyme]-L-cysteine + [acceptor protein]-L-lysine = [E2 ubiquitin-conjugating enzyme]-L-cysteine + N(6)-ubiquitinyl-[acceptor protein]-L-lysine.. The protein operates within protein modification; protein ubiquitination. Functionally, E3 ubiquitin-protein ligase able to catalyze polyubiquitination with ubiquitin-conjugating enzyme E2 UBC8 in vitro. The sequence is that of E3 ubiquitin-protein ligase ATL4 from Arabidopsis thaliana (Mouse-ear cress).